The sequence spans 316 residues: Ribosomal protein L11 methyltransferase (316 aa).

S-adenosyl-L-methionine contacts are provided by T157, G178, D200, and N243.

It belongs to the methyltransferase superfamily. PrmA family.

The protein resides in the cytoplasm. The enzyme catalyses L-lysyl-[protein] + 3 S-adenosyl-L-methionine = N(6),N(6),N(6)-trimethyl-L-lysyl-[protein] + 3 S-adenosyl-L-homocysteine + 3 H(+). Methylates ribosomal protein L11. In Streptococcus pneumoniae (strain Hungary19A-6), this protein is Ribosomal protein L11 methyltransferase.